A 392-amino-acid polypeptide reads, in one-letter code: LL-diaminopimelate aminotransferase (392 aa).

Substrate contacts are provided by Y15, G40, K104, Y128, and N178. Pyridoxal 5'-phosphate is bound by residues 103–104 (SK), Y128, N178, Y209, and 237–239 (SVS). The residue at position 240 (K240) is an N6-(pyridoxal phosphate)lysine. Pyridoxal 5'-phosphate is bound at residue R248. R366 contributes to the substrate binding site.

This sequence belongs to the class-I pyridoxal-phosphate-dependent aminotransferase family. LL-diaminopimelate aminotransferase subfamily. As to quaternary structure, homodimer. Pyridoxal 5'-phosphate serves as cofactor.

The catalysed reaction is (2S,6S)-2,6-diaminopimelate + 2-oxoglutarate = (S)-2,3,4,5-tetrahydrodipicolinate + L-glutamate + H2O + H(+). The protein operates within amino-acid biosynthesis; L-lysine biosynthesis via DAP pathway; LL-2,6-diaminopimelate from (S)-tetrahydrodipicolinate (aminotransferase route): step 1/1. In terms of biological role, involved in the synthesis of meso-diaminopimelate (m-DAP or DL-DAP), required for both lysine and peptidoglycan biosynthesis. Catalyzes the direct conversion of tetrahydrodipicolinate to LL-diaminopimelate. In Desulforudis audaxviator (strain MP104C), this protein is LL-diaminopimelate aminotransferase.